A 224-amino-acid chain; its full sequence is Dehydration-responsive element-binding protein 1G (224 aa).

A compositionally biased stretch (polar residues) spans Met-1–Pro-16. A disordered region spans residues Met-1–Lys-46. The AP2/ERF DNA-binding region spans Val-54–Ala-111.

It belongs to the AP2/ERF transcription factor family. ERF subfamily.

It is found in the nucleus. In terms of biological role, transcriptional activator that binds specifically to the DNA sequence 5'-[AG]CCGAC-3'. Binding to the C-repeat/DRE element mediates high salinity- and dehydration-inducible transcription. In Oryza sativa subsp. indica (Rice), this protein is Dehydration-responsive element-binding protein 1G (DREB1G).